A 956-amino-acid polypeptide reads, in one-letter code: Glutamate receptor ionotropic, kainate 4 (956 aa).

The N-terminal stretch at 1-20 is a signal peptide; that stretch reads MPRVSAPLVLLPAWLLMVAC. Topologically, residues 21-545 are extracellular; that stretch reads SPHSLRIAAI…YFSSLDPFSP (525 aa). N-linked (GlcNAc...) asparagine glycans are attached at residues N158, N220, N272, N286, N323, N408, N415, and N479. L-glutamate contacts are provided by G500, T502, and R507. A helical transmembrane segment spans residues 546-566; sequence GVWLFMLLAYLAVSCVLFLVA. The Cytoplasmic segment spans residues 567-623; sequence RLTPYEWYSPHPCAQGRCNLLVNQYSLGNSLWFPVGGFMQQGSTIAPRALSTRCVSG. A helical transmembrane segment spans residues 624–644; the sequence is VWWAFTLIIISSYTANLAAFL. Residues 645-804 are Extracellular-facing; sequence TVQRMEVPIE…HRAKGLGMEN (160 aa). Positions 674, 675, and 723 each coordinate L-glutamate. N-linked (GlcNAc...) asparagine glycosylation occurs at N736. The helical transmembrane segment at 805–825 threads the bilayer; the sequence is IGGIFVVLICGLIVAIFMAML. At 826-956 the chain is on the cytoplasmic side; it reads EFLWTLRHSE…DKTTNSSEPE (131 aa). A disordered region spans residues 931–956; sequence LRARPSPARSEESLEWDKTTNSSEPE. Positions 939 to 948 are enriched in basic and acidic residues; it reads RSEESLEWDK.

It belongs to the glutamate-gated ion channel (TC 1.A.10.1) family. GRIK4 subfamily. As to quaternary structure, homodimer. Can form functional heteromeric receptors with GRIK1, GRIK2 and GRIK3. Strong expression in hippocampal CA3 pyramidal cells. Low expression in hippocampal dentate granule cells, in layers II, V and VI of the cortex, and in cerebellar Purkinje cells. No expression in the striatum, reticular thalamus, hypothalamus or amygdaloid complex.

It localises to the cell membrane. The protein localises to the postsynaptic cell membrane. Its subcellular location is the presynaptic cell membrane. Ionotropic glutamate receptor that functions as a cation-permeable ligand-gated ion channel, gated by L-glutamate and the glutamatergic agonist kainic acid. Cannot form functional channels on its own and shows channel activity only in heteromeric assembly with GRIK1, GRIK2 and GRIK3 subunits. This is Glutamate receptor ionotropic, kainate 4 (Grik4) from Rattus norvegicus (Rat).